A 220-amino-acid polypeptide reads, in one-letter code: NADH-quinone oxidoreductase subunit B (220 aa).

Cys37, Cys38, Cys103, and Cys132 together coordinate [4Fe-4S] cluster. Residues 174–220 (PSSERYAPKNRSQRKLAERQQAAQRREMGAEKPLGALEERAELNAGR) are disordered. Basic and acidic residues predominate over residues 210–220 (LEERAELNAGR).

Belongs to the complex I 20 kDa subunit family. In terms of assembly, NDH-1 is composed of 14 different subunits. Subunits NuoB, C, D, E, F, and G constitute the peripheral sector of the complex. [4Fe-4S] cluster is required as a cofactor.

It localises to the cell membrane. It carries out the reaction a quinone + NADH + 5 H(+)(in) = a quinol + NAD(+) + 4 H(+)(out). NDH-1 shuttles electrons from NADH, via FMN and iron-sulfur (Fe-S) centers, to quinones in the respiratory chain. The immediate electron acceptor for the enzyme in this species is believed to be a menaquinone. Couples the redox reaction to proton translocation (for every two electrons transferred, four hydrogen ions are translocated across the cytoplasmic membrane), and thus conserves the redox energy in a proton gradient. The polypeptide is NADH-quinone oxidoreductase subunit B (Saccharopolyspora erythraea (strain ATCC 11635 / DSM 40517 / JCM 4748 / NBRC 13426 / NCIMB 8594 / NRRL 2338)).